We begin with the raw amino-acid sequence, 180 residues long: Large ribosomal subunit protein uL6 (180 aa).

The protein belongs to the universal ribosomal protein uL6 family. In terms of assembly, part of the 50S ribosomal subunit.

In terms of biological role, this protein binds to the 23S rRNA, and is important in its secondary structure. It is located near the subunit interface in the base of the L7/L12 stalk, and near the tRNA binding site of the peptidyltransferase center. This is Large ribosomal subunit protein uL6 from Clostridioides difficile (strain 630) (Peptoclostridium difficile).